Reading from the N-terminus, the 363-residue chain is Aminopyrrolnitrin oxygenase PrnD (363 aa).

The Rieske domain maps to 29 to 137; it reads WYVAMRSNEL…TAERYGYVWV (109 aa). Positions 69, 71, 88, and 91 each coordinate [2Fe-2S] cluster.

As to quaternary structure, homodimer. Requires [2Fe-2S] cluster as cofactor. Fe cation serves as cofactor. The cofactor is FMN.

It catalyses the reaction aminopyrrolnitrin + NADPH + 2 O2 + H(+) = pyrrolnitrin + NADP(+) + 2 H2O. It participates in antibiotic biosynthesis. Its function is as follows. Involved in the biosynthesis of the antifungal antibiotic pyrrolnitrin (PRN). Catalyzes the oxidation of the amino group of aminopyrrolnitrin (APRN) to a nitro group to form PRN. It has high substrate specificity toward physiological substrate aminopyrrolnitrin, p-aminobenzylamine (pABA), p-aminobenzyl alcohol, and p-aminophenyl alanine. The sequence is that of Aminopyrrolnitrin oxygenase PrnD (prnD) from Pseudomonas fluorescens.